The chain runs to 245 residues: MTYTLVLLRHGESEWNALNLFTGWVDVHLTDKGVAEGKRAGELLAEHGILPDIVYTSLLRRAISTANIALDAADRHWIPVVRDWRLNERHYGELQGKNKAQIRDKYGEEQFMLWRRSYDTPPPPIEAGNEYSQEGDARYAGIDIPKTECLLDVVNRMVPYWESTISKDLLAGKTVLIAAHGNSLRALVKHLDQISDEEIAGLNIPTGIPLRYELDENLRPVRPREYLDPEAAAAGAAAVASQGGK.

Residues 9–16, 22–23, Arg-61, 88–91, Lys-99, 115–116, and 181–182 contribute to the substrate site; these read RHGESEWN, TG, ERHY, RR, and GN. The Tele-phosphohistidine intermediate role is filled by His-10. Residue Glu-88 is the Proton donor/acceptor of the active site.

It belongs to the phosphoglycerate mutase family. BPG-dependent PGAM subfamily.

The enzyme catalyses (2R)-2-phosphoglycerate = (2R)-3-phosphoglycerate. It participates in carbohydrate degradation; glycolysis; pyruvate from D-glyceraldehyde 3-phosphate: step 3/5. In terms of biological role, catalyzes the interconversion of 2-phosphoglycerate and 3-phosphoglycerate. The sequence is that of 2,3-bisphosphoglycerate-dependent phosphoglycerate mutase from Nocardia farcinica (strain IFM 10152).